The sequence spans 514 residues: 2,3-bisphosphoglycerate-independent phosphoglycerate mutase (514 aa).

The Mn(2+) site is built by D14 and S64. The Phosphoserine intermediate role is filled by S64. Substrate is bound by residues H125, 155–156 (RD), R187, R193, 263–266 (RADR), and K336. Mn(2+) contacts are provided by D403, H407, D444, H445, and H463.

It belongs to the BPG-independent phosphoglycerate mutase family. In terms of assembly, monomer. The cofactor is Mn(2+).

The enzyme catalyses (2R)-2-phosphoglycerate = (2R)-3-phosphoglycerate. Its pathway is carbohydrate degradation; glycolysis; pyruvate from D-glyceraldehyde 3-phosphate: step 3/5. In terms of biological role, catalyzes the interconversion of 2-phosphoglycerate and 3-phosphoglycerate. The chain is 2,3-bisphosphoglycerate-independent phosphoglycerate mutase from Shewanella pealeana (strain ATCC 700345 / ANG-SQ1).